We begin with the raw amino-acid sequence, 311 residues long: tRNA dimethylallyltransferase (311 aa).

10-17 (GPTAVGKT) lines the ATP pocket. 12–17 (TAVGKT) is a binding site for substrate. The segment at 35-38 (DSMQ) is interaction with substrate tRNA.

The protein belongs to the IPP transferase family. Monomer. Mg(2+) serves as cofactor.

The enzyme catalyses adenosine(37) in tRNA + dimethylallyl diphosphate = N(6)-dimethylallyladenosine(37) in tRNA + diphosphate. Its function is as follows. Catalyzes the transfer of a dimethylallyl group onto the adenine at position 37 in tRNAs that read codons beginning with uridine, leading to the formation of N6-(dimethylallyl)adenosine (i(6)A). This chain is tRNA dimethylallyltransferase, found in Anoxybacillus flavithermus (strain DSM 21510 / WK1).